A 36-amino-acid polypeptide reads, in one-letter code: Potassium channel toxin alpha-KTx 1.9 (36 aa).

The protein belongs to the short scorpion toxin superfamily. Potassium channel inhibitor family. Alpha-KTx 01 subfamily. As to expression, expressed by the venom gland.

It is found in the secreted. Potent selective inhibitor of Kv1/KCNA voltage-gated potassium channels. The protein is Potassium channel toxin alpha-KTx 1.9 of Centruroides limbatus (Bark scorpion).